We begin with the raw amino-acid sequence, 433 residues long: Protein arginine N-methyltransferase 2 (433 aa).

A disordered region spans residues 1-20 (MATSGDCPRSESQGEEPAEC). Interaction with ESR1 stretches follow at residues 1–277 (MATS…SALK) and 133–275 (KESL…NLSA). Residues 30–89 (VQPEEFVAIADYAATDETQLSFLRGEKILILRQTTADWWWGERAGCCGYIPANHVGKHVD) form the SH3 domain. Residues Arg-61 and Arg-72 each carry the asymmetric dimethylarginine modification. The interaction with RB1 stretch occupies residues 83 to 207 (HVGKHVDEYD…DVVLPEKVDV (125 aa)). Residues 99–432 (DEEYFGSYGT…KVGEKVFPIW (334 aa)) form the SAM-dependent MTase PRMT-type domain. Residues His-112, Arg-121, Gly-145, Glu-168, and Glu-197 each coordinate S-adenosyl-L-methionine. Active-site residues include Glu-211 and Glu-220.

It belongs to the class I-like SAM-binding methyltransferase superfamily. Protein arginine N-methyltransferase family. Self-associates. Interacts with RB1 and E2F1. Interacts with NCOA6 coactivator. Interacts (via SH3 domain) with PRMT8. Interacts with AR. Interacts with NFKBIA. Interacts with ESR1, ESR2, PGR, PPARG, RARA, RXRA and THRB. Interacts with HNRNPUL1. Widely expressed. Highly expressed in androgen target organs such as heart, prostate, skeletal muscle, ovary and spinal cord.

It localises to the cytoplasm. It is found in the nucleus. The protein resides in the nucleolus. It carries out the reaction L-arginyl-[protein] + 2 S-adenosyl-L-methionine = N(omega),N(omega)-dimethyl-L-arginyl-[protein] + 2 S-adenosyl-L-homocysteine + 2 H(+). Its function is as follows. Arginine methyltransferase that methylates the guanidino nitrogens of arginyl residues in proteins such as STAT3, FBL, histone H4. Acts as a coactivator (with NCOA2) of the androgen receptor (AR)-mediated transactivation. Acts as a coactivator (with estrogen) of estrogen receptor (ER)-mediated transactivation. Enhances PGR, PPARG, RARA-mediated transactivation. May inhibit NF-kappa-B transcription and promote apoptosis. Represses E2F1 transcriptional activity (in a RB1-dependent manner). May be involved in growth regulation. The chain is Protein arginine N-methyltransferase 2 (PRMT2) from Homo sapiens (Human).